The primary structure comprises 32 residues: Phospholipase A2 (32 aa).

Residues Y16, G18, and G20 each contribute to the Ca(2+) site.

Requires Ca(2+) as cofactor. In terms of tissue distribution, expressed by the venom gland.

It localises to the secreted. The enzyme catalyses a 1,2-diacyl-sn-glycero-3-phosphocholine + H2O = a 1-acyl-sn-glycero-3-phosphocholine + a fatty acid + H(+). PLA2 catalyzes the calcium-dependent hydrolysis of the 2-acyl groups in 3-sn-phosphoglycerides. This Micrurus lemniscatus (South American coral snake) protein is Phospholipase A2.